A 1077-amino-acid polypeptide reads, in one-letter code: Rap guanine nucleotide exchange factor 1 (1077 aa).

Residue leucine 57 forms a Glycyl lysine isopeptide (Lys-Gly) (interchain with G-Cter in SUMO2) linkage. Disordered regions lie at residues 207–235 and 248–300; these read IEKQ…AELP and TGMS…PTRV. The segment covering 213-228 has biased composition (low complexity); that stretch reads PSPTSPVKPSSPASKP. A phosphoserine mark is found at serine 281, serine 293, serine 314, serine 335, and serine 360. The SH3-binding motif lies at 281-292; the sequence is SPPPALPPKKRQ. Disordered stretches follow at residues 336 to 376 and 411 to 494; these read GGSH…QCSR and LSPL…EDLQ. The span at 358–371 shows a compositional bias: basic and acidic residues; that stretch reads SKSDEQLSSLDRDS. Positions 451–462 match the SH3-binding motif; the sequence is DTPPALPEKKRR. Over residues 484-494 the composition is skewed to polar residues; it reads QYDNISGEDLQ. Position 504 is a phosphotyrosine; by HCK (tyrosine 504). 2 short sequence motifs (SH3-binding) span residues 538–549 and 606–617; these read EKPPPLPEKKNK and APPPALPPKQRQ. Residues 600-670 are disordered; that stretch reads DSVQELAPPP…SEEEVDELSL (71 aa). Residues 640-651 are compositionally biased toward basic and acidic residues; the sequence is KDSRDGSERAPK. The segment covering 660-669 has biased composition (acidic residues); that stretch reads QSEEEVDELS. The 123-residue stretch at 688–810 folds into the N-terminal Ras-GEF domain; the sequence is DGPDVRGGSG…LRKNILDKVD (123 aa). The Ras-GEF domain maps to 840–1064; that stretch reads HSHEIAEQLT…WELSLKIKPR (225 aa).

As to quaternary structure, interacts with HCK (via SH3-binding sites). Interacts with CRK (via SH3-binding sites). In terms of processing, phosphorylation at Tyr-504 enhances activity as Rap guanine nucleotide exchange factor. Ubiquitously expressed in adult and fetus. Expression is high in adult skeletal muscle and placenta and in fetal brain and heart. Low levels of expression in adult and fetal liver.

The protein resides in the early endosome. Its function is as follows. Guanine nucleotide-releasing protein that binds to SH3 domain of CRK and GRB2/ASH. Transduces signals from CRK to activate RAS. Involved in cell branching and adhesion mediated by BCAR1-CRK-RAPGEF1 signaling and activation of RAP1. Plays a role in the establishment of basal endothelial barrier function. Plays a role in nerve growth factor (NGF)-induced sustained activation of Rap1 and neurite outgrowth. In Homo sapiens (Human), this protein is Rap guanine nucleotide exchange factor 1 (RAPGEF1).